Reading from the N-terminus, the 529-residue chain is Peptide chain release factor 3 (529 aa).

The tr-type G domain occupies 11–280 (AKRRTFAIIS…GLVEWAPAPM (270 aa)). GTP-binding positions include 20-27 (SHPDAGKT), 88-92 (DTPGH), and 142-145 (NKLD).

Belongs to the TRAFAC class translation factor GTPase superfamily. Classic translation factor GTPase family. PrfC subfamily.

The protein localises to the cytoplasm. Its function is as follows. Increases the formation of ribosomal termination complexes and stimulates activities of RF-1 and RF-2. It binds guanine nucleotides and has strong preference for UGA stop codons. It may interact directly with the ribosome. The stimulation of RF-1 and RF-2 is significantly reduced by GTP and GDP, but not by GMP. This is Peptide chain release factor 3 from Shigella flexneri serotype 5b (strain 8401).